Here is a 310-residue protein sequence, read N- to C-terminus: 4-diphosphocytidyl-2-C-methyl-D-erythritol kinase (310 aa).

Lysine 20 is an active-site residue. 106 to 116 serves as a coordination point for ATP; that stretch reads PMGGGLGGGSS. Residue aspartate 148 is part of the active site.

Belongs to the GHMP kinase family. IspE subfamily. Homodimer.

It catalyses the reaction 4-CDP-2-C-methyl-D-erythritol + ATP = 4-CDP-2-C-methyl-D-erythritol 2-phosphate + ADP + H(+). It participates in isoprenoid biosynthesis; isopentenyl diphosphate biosynthesis via DXP pathway; isopentenyl diphosphate from 1-deoxy-D-xylulose 5-phosphate: step 3/6. In terms of biological role, catalyzes the phosphorylation of the position 2 hydroxy group of 4-diphosphocytidyl-2C-methyl-D-erythritol. This is 4-diphosphocytidyl-2-C-methyl-D-erythritol kinase from Yersinia pseudotuberculosis serotype O:3 (strain YPIII).